We begin with the raw amino-acid sequence, 68 residues long: Guanine nucleotide-binding protein G(I)/G(S)/G(O) subunit gamma-10 (68 aa).

Ser2 bears the N-acetylserine mark. Cys65 is subject to Cysteine methyl ester. A lipid anchor (S-geranylgeranyl cysteine) is attached at Cys65. A propeptide spans 66-68 (ALL) (removed in mature form).

This sequence belongs to the G protein gamma family. In terms of assembly, g proteins are composed of 3 units, alpha, beta and gamma. In terms of tissue distribution, abundantly and ubiquitously expressed.

Its subcellular location is the cell membrane. Guanine nucleotide-binding proteins (G proteins) are involved as a modulator or transducer in various transmembrane signaling systems. The beta and gamma chains are required for the GTPase activity, for replacement of GDP by GTP, and for G protein-effector interaction. Interacts with beta-1 and beta-2, but not with beta-3. The protein is Guanine nucleotide-binding protein G(I)/G(S)/G(O) subunit gamma-10 (GNG10) of Homo sapiens (Human).